The sequence spans 391 residues: Probable inactive allantoicase (391 aa).

This sequence belongs to the allantoicase family.

Its function is as follows. The function of this enzyme is unclear as allantoicase activity is not known to exist in mammals. The sequence is that of Probable inactive allantoicase from Homo sapiens (Human).